A 139-amino-acid polypeptide reads, in one-letter code: Type II methyltransferase M.AquIB (139 aa).

The SAM-dependent MTase C5-type domain maps to 1–135; sequence MDIKNVHIKN…KAVSEQLLDV (135 aa). The interval 38–58 is disordered; that stretch reads KTFGSTYRRLDPNQPSPTVTR.

Belongs to the class I-like SAM-binding methyltransferase superfamily. C5-methyltransferase family. Heterodimer of an alpha and a beta subunit.

It catalyses the reaction a 2'-deoxycytidine in DNA + S-adenosyl-L-methionine = a 5-methyl-2'-deoxycytidine in DNA + S-adenosyl-L-homocysteine + H(+). Functionally, a methylase, recognizes the double-stranded sequence 5'-CYCGRG-3', methylates C-1 on both strands, and protects the DNA from cleavage by the AquI endonuclease. The protein is Type II methyltransferase M.AquIB (aquIMB) of Picosynechococcus sp. (strain ATCC 27264 / PCC 7002 / PR-6) (Agmenellum quadruplicatum).